The chain runs to 315 residues: Ribosomal RNA small subunit methyltransferase H (315 aa).

S-adenosyl-L-methionine is bound by residues 36-38, aspartate 56, phenylalanine 81, aspartate 103, and glutamine 110; that span reads GGH.

This sequence belongs to the methyltransferase superfamily. RsmH family.

The protein localises to the cytoplasm. It carries out the reaction cytidine(1402) in 16S rRNA + S-adenosyl-L-methionine = N(4)-methylcytidine(1402) in 16S rRNA + S-adenosyl-L-homocysteine + H(+). Functionally, specifically methylates the N4 position of cytidine in position 1402 (C1402) of 16S rRNA. The protein is Ribosomal RNA small subunit methyltransferase H of Idiomarina loihiensis (strain ATCC BAA-735 / DSM 15497 / L2-TR).